A 198-amino-acid chain; its full sequence is MEHYISLFVKSVFIENMALSFFLGMCTFLAVSKKVSTAFGLGIAVIVVLGISVPVNQLVYTHILKDGALIEGVDLSFLNFITFIGVIAALVQILEMFLDKFVPSLYEALGIFLPLITVNCAIFGGVSFMVQREYNFPESVVYGIGAGTGWMLAIVALAGLTEKMKYADVPAGLRGLGITFITVGLMALGFMSFSGIQL.

A run of 6 helical transmembrane segments spans residues 11-31 (SVFI…FLAV), 35-55 (VSTA…SVPV), 77-97 (FLNF…LEMF), 110-130 (GIFL…SFMV), 140-160 (VVYG…LAGL), and 176-196 (LGIT…FSGI).

Belongs to the NqrDE/RnfAE family. In terms of assembly, composed of six subunits; NqrA, NqrB, NqrC, NqrD, NqrE and NqrF.

It is found in the cell inner membrane. It catalyses the reaction a ubiquinone + n Na(+)(in) + NADH + H(+) = a ubiquinol + n Na(+)(out) + NAD(+). NQR complex catalyzes the reduction of ubiquinone-1 to ubiquinol by two successive reactions, coupled with the transport of Na(+) ions from the cytoplasm to the periplasm. NqrA to NqrE are probably involved in the second step, the conversion of ubisemiquinone to ubiquinol. This is Na(+)-translocating NADH-quinone reductase subunit E from Mannheimia succiniciproducens (strain KCTC 0769BP / MBEL55E).